Consider the following 207-residue polypeptide: Probable GTP-binding protein EngB (207 aa).

In terms of domain architecture, EngB-type G spans 24–199 (GGYEVAFAGR…RGIVGGWLGL (176 aa)). GTP contacts are provided by residues 32-39 (GRSNAGKS), 59-63 (GRTQQ), 77-80 (DLPG), 144-147 (TKAD), and 178-180 (YSG). The Mg(2+) site is built by S39 and T61.

It belongs to the TRAFAC class TrmE-Era-EngA-EngB-Septin-like GTPase superfamily. EngB GTPase family. It depends on Mg(2+) as a cofactor.

Necessary for normal cell division and for the maintenance of normal septation. The polypeptide is Probable GTP-binding protein EngB (Xanthomonas campestris pv. campestris (strain 8004)).